Here is a 311-residue protein sequence, read N- to C-terminus: Transcription factor MafB (311 aa).

Disordered regions lie at residues 35–78 and 150–199; these read PLGR…PTEQ and EDLA…EDRF. The span at 54 to 76 shows a compositional bias: low complexity; it reads SVSSTPISTPCSSVPSSPSFSPT. Residues 157-167 show a composition bias toward basic residues; that stretch reads HPHHHHHHHHQ. Residues 168–194 show a composition bias toward low complexity; it reads ASPTPSTSSSSSQQLQTSHQQHPPSSS. The tract at residues 226–251 is basic motif; the sequence is RLKQKRRTLKNRGYAQSCRYKRVQQK. The 64-residue stretch at 226–289 folds into the bZIP domain; it reads RLKQKRRTLK…DAYKLKCEKL (64 aa). A leucine-zipper region spans residues 254-275; the sequence is LENEKTQLIQQVEQLKQEVTRL.

The protein belongs to the bZIP family. Maf subfamily. In terms of assembly, homodimer or heterodimer with other bHLH-Zip transcription factors. Binds DNA as a homodimer or heterodimer. Self-associates; the interaction requires the intact MAFB leucine-zipper domain. Interacts with FOS, HOXD12 and PRRX1. In terms of tissue distribution, expressed in brain, thymus, gut, lung, mesenterium, spleen, kidney, ovary and bursa.

The protein resides in the nucleus. Acts as a transcriptional activator or repressor. Positively regulates the expression of alpha-A crystallin genes during lens fiber cell differentiation. Binds to Maf recognition elements (MARE). The protein is Transcription factor MafB (MAFB) of Gallus gallus (Chicken).